The primary structure comprises 342 residues: Mitochondrial sorting homolog (342 aa).

The Mitochondrial intermembrane segment spans residues 1-6; that stretch reads MTDRNE. A helical membrane pass occupies residues 7–25; it reads LIGVAIRVVAAAAVSFLSV. Topologically, residues 26–342 are cytoplasmic; that stretch reads RYLVKYLDPN…AHLLVEETLD (317 aa). ATP is bound at residue 124–131; the sequence is GPPGCGKT.

This sequence belongs to the AAA ATPase family.

The protein localises to the mitochondrion outer membrane. Involved in intramitochondrial sorting of proteins. The polypeptide is Mitochondrial sorting homolog (mspn-1) (Caenorhabditis elegans).